A 225-amino-acid chain; its full sequence is Transcriptional regulatory protein CssR (225 aa).

The 114-residue stretch at 4-117 folds into the Response regulatory domain; it reads TIYLVEDEDN…ELIIRVQKLL (114 aa). Aspartate 52 is modified (4-aspartylphosphate). The segment at residues 129–224 is a DNA-binding region (ompR/PhoB-type); it reads KNEIAVSSYR…IYGFGYRMMS (96 aa).

In terms of processing, phosphorylated by CssS.

Its subcellular location is the cytoplasm. Member of the two-component regulatory system CssS/CssR required to control the cellular response to secretion stress. The sequence is that of Transcriptional regulatory protein CssR (cssR) from Bacillus subtilis (strain 168).